The sequence spans 229 residues: Ribonuclease 3 (229 aa).

In terms of domain architecture, RNase III spans 5-127; it reads LDRLERKLGY…LIGAIYLDTG (123 aa). Mg(2+) is bound at residue glutamate 40. Aspartate 44 is a catalytic residue. Mg(2+)-binding residues include aspartate 113 and glutamate 116. Glutamate 116 is an active-site residue. In terms of domain architecture, DRBM spans 154–224; sequence DPKTRLQEFL…AAAALVALGV (71 aa).

This sequence belongs to the ribonuclease III family. In terms of assembly, homodimer. Mg(2+) is required as a cofactor.

The protein resides in the cytoplasm. The catalysed reaction is Endonucleolytic cleavage to 5'-phosphomonoester.. Digests double-stranded RNA. Involved in the processing of primary rRNA transcript to yield the immediate precursors to the large and small rRNAs (23S and 16S). Processes some mRNAs, and tRNAs when they are encoded in the rRNA operon. Processes pre-crRNA and tracrRNA of type II CRISPR loci if present in the organism. This is Ribonuclease 3 from Pseudomonas aeruginosa (strain LESB58).